The chain runs to 436 residues: uncharacterized protein (436 aa).

The signal sequence occupies residues 1–19 (MKKLLLASIIGLASTTSFA).

This is an uncharacterized protein from Rickettsia bellii (strain RML369-C).